The primary structure comprises 487 residues: Putative beta-glucosidase 35 (487 aa).

Residues 1–27 (MGIRMGRRLLLITLLLGALLCNNVAYA) form the signal peptide. Glutamine 48 is an a beta-D-glucoside binding site. Asparagine 76 and asparagine 116 each carry an N-linked (GlcNAc...) asparagine glycan. A beta-D-glucoside-binding positions include histidine 151 and 200 to 201 (NE). Catalysis depends on glutamate 201, which acts as the Proton donor. A disulfide bridge connects residues cysteine 220 and cysteine 228. Residue tyrosine 344 participates in a beta-D-glucoside binding. Asparagine 369 carries an N-linked (GlcNAc...) asparagine glycan. Glutamate 414 contributes to the a beta-D-glucoside binding site. Glutamate 414 (nucleophile) is an active-site residue. Residues asparagine 418 and asparagine 419 are each glycosylated (N-linked (GlcNAc...) asparagine). A beta-D-glucoside is bound at residue phenylalanine 458.

This sequence belongs to the glycosyl hydrolase 1 family.

The catalysed reaction is Hydrolysis of terminal, non-reducing beta-D-glucosyl residues with release of beta-D-glucose.. In Oryza sativa subsp. japonica (Rice), this protein is Putative beta-glucosidase 35 (BGLU35).